A 380-amino-acid polypeptide reads, in one-letter code: Cytochrome b (380 aa).

4 helical membrane passes run 34-54, 78-99, 114-134, and 179-199; these read FGSL…LLAT, WLIR…YLHI, WNTG…GYVL, and FFAL…IHLT. Heme b contacts are provided by histidine 84 and histidine 98. Positions 183 and 197 each coordinate heme b. Histidine 202 lines the a ubiquinone pocket. The next 4 helical transmembrane spans lie at 227–247, 289–309, 321–341, and 348–368; these read LKDI…ALFS, LGGV…PLLH, FSQF…WVGS, and FIII…LLFP.

The protein belongs to the cytochrome b family. The cytochrome bc1 complex contains 11 subunits: 3 respiratory subunits (MT-CYB, CYC1 and UQCRFS1), 2 core proteins (UQCRC1 and UQCRC2) and 6 low-molecular weight proteins (UQCRH/QCR6, UQCRB/QCR7, UQCRQ/QCR8, UQCR10/QCR9, UQCR11/QCR10 and a cleavage product of UQCRFS1). This cytochrome bc1 complex then forms a dimer. Heme b is required as a cofactor.

The protein localises to the mitochondrion inner membrane. Its function is as follows. Component of the ubiquinol-cytochrome c reductase complex (complex III or cytochrome b-c1 complex) that is part of the mitochondrial respiratory chain. The b-c1 complex mediates electron transfer from ubiquinol to cytochrome c. Contributes to the generation of a proton gradient across the mitochondrial membrane that is then used for ATP synthesis. The protein is Cytochrome b (MT-CYB) of Alle alle (Dovekie).